Reading from the N-terminus, the 662-residue chain is MASAGKPALDDSRRGTGSPKIKGRENAKDTLCRNITIYGRCRYEDKGCAFNHDPHKVNSSNQSDSKKRFNVDSPSFTPSLLSSNGSSPTSTPATTKKMTTISPKAANAAPFQPRSVVSRSNASTPGLRQDTVTPDWTVAEVQEFVPQGFDNSHLAALQGNGNGPITSTSPFDPFVTTPTPLSAGGAVGPVQPNPYSHDAAAALGGAAFFPGAAGFQQPVQYHLYAPIGPHNQNTLGYQRNVHDLFLPNDFREELQKKAAATLQTLPNTQLPAQIDYFHSLVPLDLNHQKNATIFGFPSWVYKAQSSKDGNYYALRRLEGFRLTNEKAIRSVQAWKRVCNGSVVTVHDAFTSRSFQDSSLIFVTDYHPLSKTLAEQHLGAGQQRFQGRHNVQHIPEQILWGYMTQIANALKAIHSNGLAARVIDASKILLTGKNRIRLNACAIMDVVQFDSQRTVADLQRQDLVNFGQLIVTLGANSPTVMHNPTKAMEHFTRAYSPQLKNSVFWLLNGMQKDQDRNIDVFITGISSQLMSTFDSALHLDDQLTSDLSRELENGRLVRLMAKLNFVNERPEYEHDRQWSENGERYFLKIFRDYVFHQVDAQGDPVVDLGHVITCLNKLDAGTEEKITLISRDEQSCFIVSYKELKKALESSFQALMKPARRMH.

2 disordered regions span residues 1–29 (MASA…NAKD) and 53–133 (DPHK…DTVT). Residues 26-55 (NAKDTLCRNITIYGRCRYEDKGCAFNHDPH) form a C3H1-type zinc finger. The span at 75–102 (SFTPSLLSSNGSSPTSTPATTKKMTTIS) shows a compositional bias: low complexity. Polar residues predominate over residues 115–133 (SVVSRSNASTPGLRQDTVT). Residues 263–525 (QTLPNTQLPA…NIDVFITGIS (263 aa)) form a pseudokinase domain region. Residues arginine 315, 364 to 371 (DYHPLSKT), and 425 to 426 (SK) each bind ATP. Positions 526-564 (SQLMSTFDSALHLDDQLTSDLSRELENGRLVRLMAKLNF) form a coiled coil. The segment at 565–662 (VNERPEYEHD…ALMKPARRMH (98 aa)) is knob domain.

This sequence belongs to the protein kinase superfamily. PAN3 family. In terms of assembly, homodimer. Forms a heterotrimer with a catalytic subunit pan2 to form the poly(A)-nuclease (PAN) deadenylation complex. Interacts (via PAM-2 motif) with poly(A)-binding protein pab1 (via PABC domain), conferring substrate specificity of the enzyme complex.

Its subcellular location is the cytoplasm. In terms of biological role, regulatory subunit of the poly(A)-nuclease (PAN) deadenylation complex, one of two cytoplasmic mRNA deadenylases involved in mRNA turnover. PAN specifically shortens poly(A) tails of RNA and the activity is stimulated by poly(A)-binding protein pab1. PAN deadenylation is followed by rapid degradation of the shortened mRNA tails by the CCR4-NOT complex. Deadenylated mRNAs are then degraded by two alternative mechanisms, namely exosome-mediated 3'-5' exonucleolytic degradation, or deadenylation-dependent mRNA decaping and subsequent 5'-3' exonucleolytic degradation by xrn1. May also be involved in post-transcriptional maturation of mRNA poly(A) tails. pan3 acts as a positive regulator for PAN activity, recruiting the catalytic subunit pan2 to mRNA via its interaction with RNA and with pab1. The sequence is that of PAN2-PAN3 deadenylation complex subunit PAN3 from Aspergillus fumigatus (strain ATCC MYA-4609 / CBS 101355 / FGSC A1100 / Af293) (Neosartorya fumigata).